The sequence spans 111 residues: Succinate dehydrogenase assembly factor 1B, mitochondrial (111 aa).

The protein belongs to the complex I LYR family. SDHAF1 subfamily. In terms of assembly, interacts with the iron-sulfur protein subunit within the SDH catalytic dimer.

Its subcellular location is the mitochondrion matrix. Plays an essential role in the assembly of succinate dehydrogenase (SDH), an enzyme complex (also referred to as respiratory complex II) that is a component of both the tricarboxylic acid (TCA) cycle and the mitochondrial electron transport chain, and which couples the oxidation of succinate to fumarate with the reduction of ubiquinone (coenzyme Q) to ubiquinol. Promotes maturation of the iron-sulfur protein subunit of the SDH catalytic dimer, protecting it from the deleterious effects of oxidants. May act together with SDHAF3. This chain is Succinate dehydrogenase assembly factor 1B, mitochondrial, found in Dictyostelium discoideum (Social amoeba).